The chain runs to 309 residues: MKQMNKLITGVVTLATVVTLSACQSSHNNTKLVSMKGDTITVSDFYNETKNTELAQKAMLSLVISRVFETQYANKVSDKEVEKAYKQTADQYGTSFKTVLAQSGLTPETYKKQIRLTKLVEYAVKEQAKNETISKKDYRQAYDAYTPTMTAEIMQFEKEEDAKAALEAVKAEGADFAAIAKEKTIAADKKTTYTFDSGETTLPAEVVRAASGLKEGNRSEIITALDPATSKRTYHIIKVTKKATKKADWKAYQKRLKDIIVTGKLKDPDFQNKVIAKALDKANVKIKDKAFANILAQFAKPNQKQPAQK.

Residues 1–22 (MKQMNKLITGVVTLATVVTLSA) form the signal peptide. A lipid anchor (N-palmitoyl cysteine) is attached at Cys23. The S-diacylglycerol cysteine moiety is linked to residue Cys23. One can recognise a PpiC domain in the interval 146–241 (TPTMTAEIMQ…RTYHIIKVTK (96 aa)).

It belongs to the PrsA family.

It localises to the cell membrane. It carries out the reaction [protein]-peptidylproline (omega=180) = [protein]-peptidylproline (omega=0). Functionally, plays a major role in protein secretion by helping the post-translocational extracellular folding of several secreted proteins. The sequence is that of Foldase protein PrsA 2 (prsA2) from Streptococcus pyogenes serotype M3 (strain ATCC BAA-595 / MGAS315).